The primary structure comprises 1756 residues: Transposon Ty1-PR2 Gag-Pol polyprotein (1756 aa).

Polar residues-rich tracts occupy residues 1–10 (MESQQLSNYP), 48–60 (TKANSQQTTTPAS), and 127–152 (QSQFPQYPSSVGTPLSTPSPESGNTF). Disordered stretches follow at residues 1–93 (MESQ…MMTQ), 126–173 (PQSQ…RPPP), and 352–421 (GSRN…SKST). A compositionally biased stretch (low complexity) spans 153 to 165 (TDSSSADSDMTST). An RNA-binding region spans residues 299–401 (NNGIHINNKV…NSKSKTARAH (103 aa)). Residues 402–418 (NVSTSNNSPSTDNDSIS) show a composition bias toward low complexity. Asp461 (for protease activity; shared with dimeric partner) is an active-site residue. Positions 583–640 (NVHTSESTRKYPYPFIHRMLAHANAQTIRYSLKNNTITYFNESDVDWSSAIDYQCPDC) are integrase-type zinc finger-like. Positions 660–836 (NSYEPFQYLH…AGLDISTLLP (177 aa)) constitute an Integrase catalytic domain. Residues Asp671 and Asp736 each coordinate Mg(2+). Disordered regions lie at residues 957–1088 (SKAV…ETEK), 1093–1112 (RSPSIDASPPENNSSHNIVP), and 1131–1188 (DLPL…DNET). The span at 961–970 (SPTDSTPPST) shows a compositional bias: low complexity. Residues 1006 to 1016 (STPQISNIEST) show a composition bias toward polar residues. Positions 1039–1054 (ESSHASKSKDFRHSDS) are enriched in basic and acidic residues. Composition is skewed to polar residues over residues 1055–1083 (YSENETNHTNVPISSTGGTNNKTVPQISD) and 1102–1112 (PENNSSHNIVP). The Bipartite nuclear localization signal motif lies at 1179-1213 (KKRSLEDNETEIKVSRDTWNTKNMRSLEPPRSKKR). A Reverse transcriptase Ty1/copia-type domain is found at 1339–1477 (NNYYITQLDI…DILGLEIKYQ (139 aa)). Mg(2+) contacts are provided by Asp1347, Asp1428, Asp1429, Asp1611, Glu1653, and Asp1686. Positions 1611-1753 (DASYGNQPYY…IKTFKLLTNK (143 aa)) constitute an RNase H Ty1/copia-type domain.

As to quaternary structure, the capsid protein forms a homotrimer, from which the VLPs are assembled. The protease is a homodimer, whose active site consists of two apposed aspartic acid residues. In terms of processing, initially, virus-like particles (VLPs) are composed of the structural unprocessed proteins Gag and Gag-Pol, and also contain the host initiator methionine tRNA (tRNA(i)-Met) which serves as a primer for minus-strand DNA synthesis, and a dimer of genomic Ty RNA. Processing of the polyproteins occurs within the particle and proceeds by an ordered pathway, called maturation. First, the protease (PR) is released by autocatalytic cleavage of the Gag-Pol polyprotein yielding capsid protein p45 and a Pol-p154 precursor protein. This cleavage is a prerequisite for subsequent processing of Pol-p154 at the remaining sites to release the mature structural and catalytic proteins. Maturation takes place prior to the RT reaction and is required to produce transposition-competent VLPs.

It localises to the cytoplasm. Its subcellular location is the nucleus. It carries out the reaction DNA(n) + a 2'-deoxyribonucleoside 5'-triphosphate = DNA(n+1) + diphosphate. It catalyses the reaction Endonucleolytic cleavage to 5'-phosphomonoester.. In terms of biological role, capsid protein (CA) is the structural component of the virus-like particle (VLP), forming the shell that encapsulates the retrotransposons dimeric RNA genome. The particles are assembled from trimer-clustered units and there are holes in the capsid shells that allow for the diffusion of macromolecules. CA also has nucleocapsid-like chaperone activity, promoting primer tRNA(i)-Met annealing to the multipartite primer-binding site (PBS), dimerization of Ty1 RNA and initiation of reverse transcription. Functionally, the aspartyl protease (PR) mediates the proteolytic cleavages of the Gag and Gag-Pol polyproteins after assembly of the VLP. Its function is as follows. Reverse transcriptase/ribonuclease H (RT) is a multifunctional enzyme that catalyzes the conversion of the retro-elements RNA genome into dsDNA within the VLP. The enzyme displays a DNA polymerase activity that can copy either DNA or RNA templates, and a ribonuclease H (RNase H) activity that cleaves the RNA strand of RNA-DNA heteroduplexes during plus-strand synthesis and hydrolyzes RNA primers. The conversion leads to a linear dsDNA copy of the retrotransposon that includes long terminal repeats (LTRs) at both ends. Integrase (IN) targets the VLP to the nucleus, where a subparticle preintegration complex (PIC) containing at least integrase and the newly synthesized dsDNA copy of the retrotransposon must transit the nuclear membrane. Once in the nucleus, integrase performs the integration of the dsDNA into the host genome. The sequence is that of Transposon Ty1-PR2 Gag-Pol polyprotein (TY1B-PR2) from Saccharomyces cerevisiae (strain ATCC 204508 / S288c) (Baker's yeast).